The following is a 415-amino-acid chain: Phosphopentomutase (415 aa).

Residues D10, D313, H318, D354, H355, and H366 each coordinate Mn(2+).

It belongs to the phosphopentomutase family. Requires Mn(2+) as cofactor.

Its subcellular location is the cytoplasm. The enzyme catalyses 2-deoxy-alpha-D-ribose 1-phosphate = 2-deoxy-D-ribose 5-phosphate. It carries out the reaction alpha-D-ribose 1-phosphate = D-ribose 5-phosphate. Its pathway is carbohydrate degradation; 2-deoxy-D-ribose 1-phosphate degradation; D-glyceraldehyde 3-phosphate and acetaldehyde from 2-deoxy-alpha-D-ribose 1-phosphate: step 1/2. Its function is as follows. Isomerase that catalyzes the conversion of deoxy-ribose 1-phosphate (dRib-1-P) and ribose 1-phosphate (Rib-1-P) to deoxy-ribose 5-phosphate (dRib-5-P) and ribose 5-phosphate (Rib-5-P), respectively. This chain is Phosphopentomutase, found in Psychromonas ingrahamii (strain DSM 17664 / CCUG 51855 / 37).